Consider the following 360-residue polypeptide: Magnesium-protoporphyrin IX monomethyl ester [oxidative] cyclase (360 aa).

This sequence belongs to the AcsF family. It depends on Fe cation as a cofactor.

It catalyses the reaction Mg-protoporphyrin IX 13-monomethyl ester + 3 NADPH + 3 O2 + 2 H(+) = 3,8-divinyl protochlorophyllide a + 3 NADP(+) + 5 H2O. It functions in the pathway porphyrin-containing compound metabolism; chlorophyll biosynthesis (light-independent). Catalyzes the formation of the isocyclic ring in chlorophyll biosynthesis. Mediates the cyclase reaction, which results in the formation of divinylprotochlorophyllide (Pchlide) characteristic of all chlorophylls from magnesium-protoporphyrin IX 13-monomethyl ester (MgPMME). The sequence is that of Magnesium-protoporphyrin IX monomethyl ester [oxidative] cyclase from Synechococcus sp. (strain WH7803).